We begin with the raw amino-acid sequence, 2523 residues long: MNPPSALAFGPEERIPTASNLRLLKDVLQDDPTFAGITACLKQLPDTWKALLHQDAQLQSLASERRAAVLSNSLLNDEQHEGDMDTNQVIMPMTVLVHMVQYRQFLQQSSPSSHATVMQSVAAGGVQGFCAGLLSAFAVCSMTNEDDFDACATYAIKLAMCVGAYVDLAMESEKGDMASAIVRWSIPDGRNRVNKAVGRYQSAYISAISDEDNVTVTASRPDLDAICTSLGSTGMSSKILAMTGSFHHPKNFDLLQRMISLLRAPQLAPSTKFTNALLRSNSTGELLTGAKTIENILEDILCKTADWRLTMANTSKALRSGNGSRPNIHTFGLVEFIPSFVKNEFNILTQRLAPTAKEQTGASPSKSTLQYNDNAVAVVGMACRFPGADDLDEFWELLQSGKSMHERMPADRFSTTGLRRSNDGAPFWGNFLKDIDAFDHQFFKKSSREAAAMDPQQRLLLQCAYVAMENAGYFDPSVQHKIRDTGVYLGACSSDYNDNVASHKPTAYSTLGTLRAFLTGRISHYFDWTGPSVVYDTACSSSAVAIDAACKAILAGDCQQALAGGVSLYTSPNFYQNLDAASFLSQTGPCKPFDANADGYCRGEGVGLVVLKKLSDAIRCGDKIVAVIASTGVNQNRNCTGITVPHGGSQADLYRRVVAKSGLNASQVSYVEAHGTGTPVGDPIEFTSIKSVFANPDITRDEPLTIASVKGSIGHLEGAAGVASLIKVCLMLQHSAIPPQANFTKPNPNLGGVDMRNIVIPTSSIPWKARNKVACINNYGAAGSNGAMIVCQPSEPASKTQTRLPSQSLSYPLFISGDGTDAVEANCRAIAKYARQLQQKRAPSVVASLAYRLATSQNQNLSYAMVTTISENGDIESTLTKASATLTQPRSKAKQSVVLCFGGQVKAFVGLDQQLFDSSSILQKHLRLCDSTMRDLGYPSIFPAIFQSEPLKDPVQLHGVLFAMQYSSAKAWLDCSLQVDAVVGHSFGQLTALTVAGVLSLKDGLRLVCGRAHLIKTKWGSATGAMIAIEAPLIRVQEILSKISVAGHEAEIACYNARESHVLVGTTTAIDAVRTFVLESGIKHKRLPVTHGFHSTFTEALLPGLRELAKGLQFKSPIIPIETCTEYKSWEQATADMITKHTREPVYFVHAIERLSARLGPCTWVEAGTGASTPAMIKRCLPDSCADSFIHATLESNKAFGSLADATANLWRCSQPVQFWPFHASDRGRYVPLNLPGYQFRKTKHWLEWQDTVALPAFLEKEPSTSEPKGHELLTFSSFEDTSKSVAAFKVDPESDEFMMLVKGHAVVAQPLCPAPLYCELALRAIKHLSPETASNAPDIRDLQIHAPLGLKTNRNIRLVVQKNSIPGHWTFTVKSSMGSDDELTHAHGLVAFGGTVEQELASYQRLIGHQKIQSLMTDPECDALRGSATYKAFNRVVTYSSYYKGVQAIYGRQNEACGKIELSSGEEQMAQARGILTPLLADNFIQIAGLQINVLGDCEDHLVFVCTETQRIIYGPGLHQQPAARYEVYSTISQNGPKEVMSDVVVFDPATKNVEFVALGCRFTRVTVPGLRNALQAANGDARAQERPSGSRISPSPLAPELPAKIQIQSRENLDITEKSGRGKPPRVENIQIATPKVDYLAQVKALLHKVSDVPIDTIQKDSTLDDLGIDSLMVMEVQTEVHSEFQLTIPNKDWATLETPGKLAEYLAKTLGGSVPDSAPPGVQRVPALVISDAEQSSDESPYDSTDDSASGYGDLDIDTAATTPGIFATRDSSPFRKAALDSPNPVNKVAQRTFSDIRPKYDVFAAEEGFAGFWRDVYPRQKRLTLAYVVEAFAVMGCDLSDLAAGQILPKIEYLPQHVSLIKQLYVILADSTLITIENGTYRRTRVSVDTTPASDLLADILRAFPQHAEEHRLLDVTGSRLGDCLIGRADPLRLLFMDRANKELLDSVYANGPMYKAMSRLLGSYILDTMQQWQGQKPLRILEIGGGTGGTTKHIVKLLHQQGIDFTYCFSDLSRALVTKAKKTFSIYPQMEYMVLDIEAPPSSEYLGQFDLILSTNCIHATKNIQQTTKHMRQLLSSEGFICLVEFTRNIFWFDLVFGLLDGWWLFEDGRPHVLADENLWDQSLRAAGYGDVQWTEGQSEESKTLRLIAAFNVSNEDAKAANALASALAVPGRKGRTSATTIRWKQEGDLDLMADVYLPSDLDASTVSRPVALILHGGGHVLHTRKHINPRHIKMLQDLGFLPVSVDYRLCPEVNIRDGPMTDACEAVDWARNILPCLPVCSELRVDKEHVVVIGYSTGGHLALTTAFTTRVRGFKPPSAILGFYCPTNYSADWWRSPIYPELAQQSSSETFDLLEGVNEHAIAGYTPTVNNNVAALLMSLDDPRWRFVLHANWRAQTLPMLINGLPSKSRLARSGQTVDSVINREIPDAEDVASISPYDQIVRGSYSTPTFLLHGTKDDLIPWQQSIATVDALARRGVNARVEIIEGAEHCFDVWSDKYDGMIGRALEWLVEQCRNA.

The N-terminal acylcarrier protein transacylase domain (SAT) stretch occupies residues 58–247 (LQSLASERRA…KILAMTGSFH (190 aa)). A Ketosynthase family 3 (KS3) domain is found at 373-792 (DNAVAVVGMA…GSNGAMIVCQ (420 aa)). Active-site for beta-ketoacyl synthase activity residues include Cys539, His674, and His715. The interval 900 to 1207 (CFGGQVKAFV…KAFGSLADAT (308 aa)) is malonyl-CoA:ACP transacylase (MAT) domain. Ser986 serves as the catalytic For acyl/malonyl transferase activity. The N-terminal hotdog fold stretch occupies residues 1271–1398 (HELLTFSSFE…GLVAFGGTVE (128 aa)). Positions 1271–1573 (HELLTFSSFE…FTRVTVPGLR (303 aa)) constitute a PKS/mFAS DH domain. Positions 1301–1568 (LVKGHAVVAQ…ALGCRFTRVT (268 aa)) are product template (PT) domain. Catalysis depends on His1305, which acts as the Proton acceptor; for dehydratase activity. The C-terminal hotdog fold stretch occupies residues 1421-1573 (ECDALRGSAT…FTRVTVPGLR (153 aa)). Asp1483 acts as the Proton donor; for dehydratase activity in catalysis. Positions 1579-1601 (ANGDARAQERPSGSRISPSPLAP) are disordered. The region spanning 1639–1713 (VDYLAQVKAL…KLAEYLAKTL (75 aa)) is the Carrier domain. Ser1673 is subject to O-(pantetheine 4'-phosphoryl)serine. The segment at 1735–1757 (DAEQSSDESPYDSTDDSASGYGD) is disordered. A compositionally biased stretch (acidic residues) spans 1738-1749 (QSSDESPYDSTD). The tract at residues 1986–2085 (LEIGGGTGGT…MRQLLSSEGF (100 aa)) is methyltransferase (CMeT) domain. A thioesterase (TE) domain region spans residues 2218–2520 (LILHGGGHVL…RALEWLVEQC (303 aa)).

It depends on pantetheine 4'-phosphate as a cofactor.

It carries out the reaction 3 malonyl-CoA + acetyl-CoA + S-adenosyl-L-methionine + H(+) = 3-methylorsellinate + S-adenosyl-L-homocysteine + 3 CO2 + 4 CoA. Non-reducing polyketide synthase; part of a gene cluster that mediates the biosynthesis of a yet unidentified natural product. The first step in the pathway is performed by Preu3 that condenses one acetyl-CoA starter unit with 3 malonyl-CoA units. Preu3 also catalyzes one methylation step to produce 3-methylorsellinate, an intermediate that exhibits significant antibacterial activities against methicillin-resistant Staphylococcus aureus, multidrug-resistant Enterococcus faecalis, multidrug-resistant Enterococcus faecium, and multidrug-resistant Staphylococcus epidermidis. In Preussia isomera (Coprophilous fungus), this protein is Non-reducing polyketide synthase Preu3.